Reading from the N-terminus, the 121-residue chain is Acidic phospholipase A2 PLA-1 (121 aa).

Cystine bridges form between Cys26-Cys115, Cys28-Cys44, Cys43-Cys95, Cys49-Cys121, Cys50-Cys88, Cys57-Cys81, and Cys75-Cys86. Tyr27, Gly29, and Gly31 together coordinate Ca(2+). His47 is a catalytic residue. Ca(2+) is bound at residue Asp48. Asp89 is a catalytic residue.

It belongs to the phospholipase A2 family. Group II subfamily. D49 sub-subfamily. Requires Ca(2+) as cofactor. As to expression, expressed by the venom gland.

It is found in the secreted. It carries out the reaction a 1,2-diacyl-sn-glycero-3-phosphocholine + H2O = a 1-acyl-sn-glycero-3-phosphocholine + a fatty acid + H(+). Functionally, PLA2 catalyzes the calcium-dependent hydrolysis of the 2-acyl groups in 3-sn-phosphoglycerides. The polypeptide is Acidic phospholipase A2 PLA-1 (Eristicophis macmahoni (Leaf-nosed viper)).